A 151-amino-acid chain; its full sequence is Small ribosomal subunit protein uS15 (151 aa).

Lysine 27 carries the post-translational modification N6-acetyllysine; alternate. An N6-succinyllysine; alternate modification is found at lysine 27. Lysine 27 participates in a covalent cross-link: Glycyl lysine isopeptide (Lys-Gly) (interchain with G-Cter in ubiquitin). Serine 30 carries the phosphoserine modification. Lysine 34 carries the N6-succinyllysine modification. Phosphotyrosine is present on tyrosine 38. Lysine 43 participates in a covalent cross-link: Glycyl lysine isopeptide (Lys-Gly) (interchain with G-Cter in SUMO2).

The protein belongs to the universal ribosomal protein uS15 family. As to quaternary structure, component of the small ribosomal subunit. Part of the small subunit (SSU) processome, composed of more than 70 proteins and the RNA chaperone small nucleolar RNA (snoRNA) U3. Ubiquitinated at Lys-27 by RNF14 and RNF25 in response to ribosome collisions (ribosome stalling).

It localises to the cytoplasm. The protein resides in the nucleus. Its subcellular location is the nucleolus. Component of the small ribosomal subunit. The ribosome is a large ribonucleoprotein complex responsible for the synthesis of proteins in the cell. Part of the small subunit (SSU) processome, first precursor of the small eukaryotic ribosomal subunit. During the assembly of the SSU processome in the nucleolus, many ribosome biogenesis factors, an RNA chaperone and ribosomal proteins associate with the nascent pre-rRNA and work in concert to generate RNA folding, modifications, rearrangements and cleavage as well as targeted degradation of pre-ribosomal RNA by the RNA exosome. This is Small ribosomal subunit protein uS15 (RPS13) from Cricetulus griseus (Chinese hamster).